The sequence spans 132 residues: UPF0299 membrane protein YohJ (132 aa).

A run of 4 helical transmembrane segments spans residues 7–27 (IIWQ…AGIF), 31–51 (LLPV…VLLA), 63–83 (GCYV…VGVM), and 93–113 (FGPV…VVSW).

This sequence belongs to the UPF0299 family.

It is found in the cell inner membrane. This Shigella boydii serotype 18 (strain CDC 3083-94 / BS512) protein is UPF0299 membrane protein YohJ.